Reading from the N-terminus, the 427-residue chain is Ribosome biogenesis protein WDR12 homolog (427 aa).

Residues 13-97 (LQLHLYTKQK…EDTVELEYVE (85 aa)) are ubiquitin-like (UBL) domain. WD repeat units lie at residues 109 to 146 (LHDDWVSAVEAKDNWILTGCYDNTLNIWTTKGKHKLTI), 148 to 190 (GHIA…NSVE), 197 to 236 (GHERGVDCIAANRSKTRMATGSWDTMLKIWSTDVRNDGDS), 260 to 298 (GHRECISGVQWIDDNTLVTSSWDHTIKIWDLALSGIKSE), 301 to 339 (GHKSFFDLSYSHLNGLIIAASPDKNLRLYDPKSNQGTIV), 345 to 385 (GHTQ…APIF), and 389 to 427 (GHEDKVLACDWSNPKFILSGGSDNSVRVFKSKIAIGEQK).

Belongs to the WD repeat WDR12/YTM1 family.

It localises to the nucleus. Its subcellular location is the nucleolus. The protein localises to the nucleoplasm. Required for maturation of ribosomal RNAs and formation of the large ribosomal subunit. This is Ribosome biogenesis protein WDR12 homolog from Aedes aegypti (Yellowfever mosquito).